The following is a 398-amino-acid chain: Phosphoglycerate kinase (398 aa).

Substrate-binding positions include 21–23, Arg-36, 59–62, Arg-119, and Arg-157; these read DFN and HLGR. Residues Lys-208, Gly-296, Glu-327, and 354-357 contribute to the ATP site; that span reads GGDS.

Belongs to the phosphoglycerate kinase family. Monomer.

It is found in the cytoplasm. The enzyme catalyses (2R)-3-phosphoglycerate + ATP = (2R)-3-phospho-glyceroyl phosphate + ADP. It functions in the pathway carbohydrate degradation; glycolysis; pyruvate from D-glyceraldehyde 3-phosphate: step 2/5. This is Phosphoglycerate kinase from Streptococcus pneumoniae serotype 19F (strain G54).